The primary structure comprises 172 residues: Ribosome maturation factor RimM (172 aa).

Positions 96 to 168 (DGEFYYHEII…RVDVELLEGL (73 aa)) constitute a PRC barrel domain.

The protein belongs to the RimM family. In terms of assembly, binds ribosomal protein uS19.

It localises to the cytoplasm. An accessory protein needed during the final step in the assembly of 30S ribosomal subunit, possibly for assembly of the head region. Essential for efficient processing of 16S rRNA. May be needed both before and after RbfA during the maturation of 16S rRNA. It has affinity for free ribosomal 30S subunits but not for 70S ribosomes. This Streptococcus suis (strain 05ZYH33) protein is Ribosome maturation factor RimM.